Here is a 168-residue protein sequence, read N- to C-terminus: Large ribosomal subunit protein uL10 (168 aa).

Belongs to the universal ribosomal protein uL10 family. Part of the ribosomal stalk of the 50S ribosomal subunit. The N-terminus interacts with L11 and the large rRNA to form the base of the stalk. The C-terminus forms an elongated spine to which L12 dimers bind in a sequential fashion forming a multimeric L10(L12)X complex.

Functionally, forms part of the ribosomal stalk, playing a central role in the interaction of the ribosome with GTP-bound translation factors. This is Large ribosomal subunit protein uL10 from Levilactobacillus brevis (strain ATCC 367 / BCRC 12310 / CIP 105137 / JCM 1170 / LMG 11437 / NCIMB 947 / NCTC 947) (Lactobacillus brevis).